Consider the following 663-residue polypeptide: DNA ligase (663 aa).

Residues Asp31–Asp35, Ser80–Leu81, and Glu109 contribute to the NAD(+) site. The active-site N6-AMP-lysine intermediate is Lys111. NAD(+)-binding residues include Arg132, Glu167, Lys283, and Lys307. Zn(2+) contacts are provided by Cys401, Cys404, Cys419, and Cys424. One can recognise a BRCT domain in the interval Lys586–Lys663.

Belongs to the NAD-dependent DNA ligase family. LigA subfamily. Requires Mg(2+) as cofactor. Mn(2+) serves as cofactor.

The enzyme catalyses NAD(+) + (deoxyribonucleotide)n-3'-hydroxyl + 5'-phospho-(deoxyribonucleotide)m = (deoxyribonucleotide)n+m + AMP + beta-nicotinamide D-nucleotide.. Functionally, DNA ligase that catalyzes the formation of phosphodiester linkages between 5'-phosphoryl and 3'-hydroxyl groups in double-stranded DNA using NAD as a coenzyme and as the energy source for the reaction. It is essential for DNA replication and repair of damaged DNA. This is DNA ligase from Clostridium kluyveri (strain NBRC 12016).